We begin with the raw amino-acid sequence, 275 residues long: 4-hydroxy-3-methylbut-2-enyl diphosphate reductase (275 aa).

Residue Cys-12 coordinates [4Fe-4S] cluster. The (2E)-4-hydroxy-3-methylbut-2-enyl diphosphate site is built by His-40 and His-70. Residues His-40 and His-70 each coordinate dimethylallyl diphosphate. Isopentenyl diphosphate-binding residues include His-40 and His-70. Cys-92 lines the [4Fe-4S] cluster pocket. A (2E)-4-hydroxy-3-methylbut-2-enyl diphosphate-binding site is contributed by His-119. Residue His-119 participates in dimethylallyl diphosphate binding. Residue His-119 participates in isopentenyl diphosphate binding. Glu-121 (proton donor) is an active-site residue. Residue Thr-151 coordinates (2E)-4-hydroxy-3-methylbut-2-enyl diphosphate. [4Fe-4S] cluster is bound at residue Cys-181. (2E)-4-hydroxy-3-methylbut-2-enyl diphosphate contacts are provided by Ser-209, Ser-210, Asn-211, and Ser-251. Dimethylallyl diphosphate contacts are provided by Ser-209, Ser-210, Asn-211, and Ser-251. Isopentenyl diphosphate contacts are provided by Ser-209, Ser-210, Asn-211, and Ser-251.

This sequence belongs to the IspH family. The cofactor is [4Fe-4S] cluster.

The catalysed reaction is isopentenyl diphosphate + 2 oxidized [2Fe-2S]-[ferredoxin] + H2O = (2E)-4-hydroxy-3-methylbut-2-enyl diphosphate + 2 reduced [2Fe-2S]-[ferredoxin] + 2 H(+). The enzyme catalyses dimethylallyl diphosphate + 2 oxidized [2Fe-2S]-[ferredoxin] + H2O = (2E)-4-hydroxy-3-methylbut-2-enyl diphosphate + 2 reduced [2Fe-2S]-[ferredoxin] + 2 H(+). It participates in isoprenoid biosynthesis; dimethylallyl diphosphate biosynthesis; dimethylallyl diphosphate from (2E)-4-hydroxy-3-methylbutenyl diphosphate: step 1/1. Its pathway is isoprenoid biosynthesis; isopentenyl diphosphate biosynthesis via DXP pathway; isopentenyl diphosphate from 1-deoxy-D-xylulose 5-phosphate: step 6/6. Catalyzes the conversion of 1-hydroxy-2-methyl-2-(E)-butenyl 4-diphosphate (HMBPP) into a mixture of isopentenyl diphosphate (IPP) and dimethylallyl diphosphate (DMAPP). Acts in the terminal step of the DOXP/MEP pathway for isoprenoid precursor biosynthesis. This chain is 4-hydroxy-3-methylbut-2-enyl diphosphate reductase, found in Thermotoga maritima (strain ATCC 43589 / DSM 3109 / JCM 10099 / NBRC 100826 / MSB8).